Reading from the N-terminus, the 260-residue chain is MRANNHFKDFAWKKCLLGASVVALLVGCSPHIIETNEVALKLNYHPASEKVQALDEKILLLRPAFQYSDNIAKEYENKFKNQTALKVEQILQNQGYKVISVDSSDKDDFSFAQKKEGYLAVAMNGEIVLRPDPKRTIQKKSEPGLLFSTGLDKMEGVLIPAGFIKVTILEPMSGESLDSFTMDLSELDIQEKFLKTTHSSHSGGLVSTMVKGTDNSNDAIKSALNKIFANIMQEIDKKLTQKNLESYQKDAKELKGKRNR.

The first 27 residues, 1–27, serve as a signal peptide directing secretion; it reads MRANNHFKDFAWKKCLLGASVVALLVG. Cysteine 28 carries the N-palmitoyl cysteine lipid modification. Cysteine 28 carries the S-diacylglycerol cysteine lipid modification. An N-acetyl-neuraminyl-alpha(2,3)-lactose binding motif region spans residues 134–139; sequence KRTIQK.

The protein resides in the cell outer membrane. The polypeptide is Neuraminyllactose-binding hemagglutinin (hpaA) (Helicobacter pylori (Campylobacter pylori)).